The chain runs to 298 residues: Succinate dehydrogenase [ubiquinone] iron-sulfur subunit, mitochondrial (298 aa).

Residues 59-147 enclose the 2Fe-2S ferredoxin-type domain; that stretch reads YRFNPEAPGA…STKIYPLPHM (89 aa). Residues Cys-107, Cys-112, Cys-115, and Cys-127 each contribute to the [2Fe-2S] cluster site. The region spanning 190–220 is the 4Fe-4S ferredoxin-type domain; that stretch reads ERDRLDGLYECILCACCSTSCPSYWWNADKY. The [4Fe-4S] cluster site is built by Cys-200, Cys-203, and Cys-206. Cys-210 lines the [3Fe-4S] cluster pocket. Trp-215 contacts a ubiquinone. Cys-257 and Cys-263 together coordinate [3Fe-4S] cluster. Cys-267 contributes to the [4Fe-4S] cluster binding site.

Belongs to the succinate dehydrogenase/fumarate reductase iron-sulfur protein family. Component of complex II composed of four subunits: a flavoprotein (FP), an iron-sulfur protein (IP), and a cytochrome b composed of a large and a small subunit. Requires [2Fe-2S] cluster as cofactor. The cofactor is [3Fe-4S] cluster. [4Fe-4S] cluster serves as cofactor.

The protein localises to the mitochondrion inner membrane. The catalysed reaction is a quinone + succinate = fumarate + a quinol. It participates in carbohydrate metabolism; tricarboxylic acid cycle; fumarate from succinate (eukaryal route): step 1/1. In terms of biological role, iron-sulfur protein (IP) subunit of succinate dehydrogenase (SDH) that is involved in complex II of the mitochondrial electron transport chain and is responsible for transferring electrons from succinate to ubiquinone (coenzyme Q). This chain is Succinate dehydrogenase [ubiquinone] iron-sulfur subunit, mitochondrial (sdhb-1), found in Caenorhabditis elegans.